The following is a 312-amino-acid chain: Glyoxylate/hydroxypyruvate reductase A (312 aa).

Arg227 is an active-site residue. His275 functions as the Proton donor in the catalytic mechanism.

Belongs to the D-isomer specific 2-hydroxyacid dehydrogenase family. GhrA subfamily.

Its subcellular location is the cytoplasm. The enzyme catalyses glycolate + NADP(+) = glyoxylate + NADPH + H(+). The catalysed reaction is (R)-glycerate + NAD(+) = 3-hydroxypyruvate + NADH + H(+). It carries out the reaction (R)-glycerate + NADP(+) = 3-hydroxypyruvate + NADPH + H(+). Its function is as follows. Catalyzes the NADPH-dependent reduction of glyoxylate and hydroxypyruvate into glycolate and glycerate, respectively. The chain is Glyoxylate/hydroxypyruvate reductase A from Klebsiella pneumoniae (strain 342).